The chain runs to 155 residues: Arginine repressor (155 aa).

It belongs to the ArgR family.

It localises to the cytoplasm. The protein operates within amino-acid biosynthesis; L-arginine biosynthesis [regulation]. Functionally, regulates arginine biosynthesis genes. In Mannheimia succiniciproducens (strain KCTC 0769BP / MBEL55E), this protein is Arginine repressor.